The following is a 266-amino-acid chain: GTP cyclohydrolase FolE2 (266 aa).

It belongs to the GTP cyclohydrolase IV family.

The enzyme catalyses GTP + H2O = 7,8-dihydroneopterin 3'-triphosphate + formate + H(+). It functions in the pathway cofactor biosynthesis; 7,8-dihydroneopterin triphosphate biosynthesis; 7,8-dihydroneopterin triphosphate from GTP: step 1/1. Its function is as follows. Converts GTP to 7,8-dihydroneopterin triphosphate. This is GTP cyclohydrolase FolE2 from Methylobacillus flagellatus (strain ATCC 51484 / DSM 6875 / VKM B-1610 / KT).